Consider the following 262-residue polypeptide: Troponin T, slow skeletal muscle (262 aa).

Residues 1 to 31 (MSDAEEQEYEEEQPEEEEAAEEEEAPEEPEP) show a composition bias toward acidic residues. Disordered regions lie at residues 1–59 (MSDA…PEGE), 107–153 (RAER…KKKV), and 165–197 (LVKAEQKRGKRQTGREMKQRILSERKKPLNIDH). Ser2 is modified (phosphoserine; by CK2). Residues 32-41 (VAEREEERPK) are compositionally biased toward basic and acidic residues. The segment covering 43 to 55 (SRPVVPPLIPPKI) has biased composition (pro residues). Composition is skewed to basic and acidic residues over residues 107–149 (RAER…DDAK) and 177–197 (TGREMKQRILSERKKPLNIDH).

It belongs to the troponin T family. In terms of assembly, interacts with TPM3.

Functionally, troponin T is the tropomyosin-binding subunit of troponin, the thin filament regulatory complex which confers calcium-sensitivity to striated muscle actomyosin ATPase activity. The polypeptide is Troponin T, slow skeletal muscle (TNNT1) (Sus scrofa (Pig)).